A 255-amino-acid chain; its full sequence is 5-oxoprolinase subunit A (255 aa).

The protein belongs to the LamB/PxpA family. Forms a complex composed of PxpA, PxpB and PxpC.

It carries out the reaction 5-oxo-L-proline + ATP + 2 H2O = L-glutamate + ADP + phosphate + H(+). In terms of biological role, catalyzes the cleavage of 5-oxoproline to form L-glutamate coupled to the hydrolysis of ATP to ADP and inorganic phosphate. The protein is 5-oxoprolinase subunit A of Campylobacter jejuni subsp. jejuni serotype O:2 (strain ATCC 700819 / NCTC 11168).